The primary structure comprises 698 residues: Polyribonucleotide nucleotidyltransferase (698 aa).

Residues Asp486 and Asp492 each coordinate Mg(2+). The 60-residue stretch at 553–612 (PRIIVRNIPKDRIGELIGPGGKNVRGISELTGAELYIEDDGKVTISGSNQESAEKAAKMV) folds into the KH domain. The S1 motif domain occupies 622–690 (GKIYEGKVKR…KTGKIDLSRK (69 aa)).

The protein belongs to the polyribonucleotide nucleotidyltransferase family. The cofactor is Mg(2+).

The protein localises to the cytoplasm. It catalyses the reaction RNA(n+1) + phosphate = RNA(n) + a ribonucleoside 5'-diphosphate. Its function is as follows. Involved in mRNA degradation. Catalyzes the phosphorolysis of single-stranded polyribonucleotides processively in the 3'- to 5'-direction. This is Polyribonucleotide nucleotidyltransferase from Leptospira interrogans serogroup Icterohaemorrhagiae serovar copenhageni (strain Fiocruz L1-130).